Reading from the N-terminus, the 235-residue chain is tRNA pseudouridine synthase B (235 aa).

The Nucleophile role is filled by aspartate 45.

Belongs to the pseudouridine synthase TruB family. Type 1 subfamily.

It carries out the reaction uridine(55) in tRNA = pseudouridine(55) in tRNA. In terms of biological role, responsible for synthesis of pseudouridine from uracil-55 in the psi GC loop of transfer RNAs. This is tRNA pseudouridine synthase B from Chlamydia abortus (strain DSM 27085 / S26/3) (Chlamydophila abortus).